Here is a 337-residue protein sequence, read N- to C-terminus: Alcohol dehydrogenase (337 aa).

Zn(2+)-binding residues include C38, H61, C92, C95, C98, C106, and C148. NAD(+)-binding positions include 172-177, D195, K200, 260-262, and R331; these read GIGGLG and VGL.

Belongs to the zinc-containing alcohol dehydrogenase family. The cofactor is Zn(2+).

The enzyme catalyses a primary alcohol + NAD(+) = an aldehyde + NADH + H(+). It catalyses the reaction a secondary alcohol + NAD(+) = a ketone + NADH + H(+). Substrate inhibition is not observed with any alcohols, and the enzyme-NADH dissociation is not considered to be a rate-limiting step. Functionally, NAD(+)-dependent alcohol dehydrogenase. The sequence is that of Alcohol dehydrogenase (adhT) from Geobacillus stearothermophilus (Bacillus stearothermophilus).